The chain runs to 455 residues: UPF0210 protein Teth514_2074 (455 aa).

This sequence belongs to the UPF0210 family. As to quaternary structure, homodimer.

The polypeptide is UPF0210 protein Teth514_2074 (Thermoanaerobacter sp. (strain X514)).